Here is a 157-residue protein sequence, read N- to C-terminus: Serine-protein kinase RsbW (157 aa).

The protein belongs to the anti-sigma-factor family.

The catalysed reaction is L-seryl-[protein] + ATP = O-phospho-L-seryl-[protein] + ADP + H(+). It carries out the reaction L-threonyl-[protein] + ATP = O-phospho-L-threonyl-[protein] + ADP + H(+). In terms of biological role, negative regulator of sigma-B activity. Phosphorylates and inactivates its specific antagonist protein, RsbV. Upon phosphorylation of RsbV, RsbW is released and binds to sigma-B, thereby blocking its ability to form an RNA polymerase holoenzyme (E-sigma-B). In Listeria monocytogenes serotype 4b (strain CLIP80459), this protein is Serine-protein kinase RsbW.